We begin with the raw amino-acid sequence, 354 residues long: Carbonic anhydrase 12 (354 aa).

A signal peptide spans 1-24 (MPRRSLHAAAVLLLVILKEQPSSP). Over 25 to 301 (APVNGSKWTY…VQVCTAAGLS (277 aa)) the chain is Extracellular. N-linked (GlcNAc...) asparagine glycosylation is found at Asn-28 and Asn-80. Positions 30 to 289 (SKWTYFGPDG…FDERLVYTSF (260 aa)) constitute an Alpha-carbonic anhydrase domain. Cysteines 50 and 230 form a disulfide. The active-site Proton donor/acceptor is the His-94. Zn(2+) is bound by residues His-119, His-121, and His-145. Asn-162 is a glycosylation site (N-linked (GlcNAc...) asparagine). 226–227 (TT) lines the substrate pocket. The chain crosses the membrane as a helical span at residues 302–322 (LGIILSLALAGILGICIVVVV). Residues 323–354 (SIWLFRRKSIKKGDNKGVIYKPATKMETEAHA) are Cytoplasmic-facing.

It belongs to the alpha-carbonic anhydrase family. In terms of assembly, homodimer. It depends on Zn(2+) as a cofactor. In terms of tissue distribution, highly expressed in colon, kidney, prostate, intestine and activated lymphocytes. Expressed at much higher levels in the renal cell cancers than in surrounding normal kidney tissue. Moderately expressed in pancreas, ovary and testis. Expressed in sweat glands and bronchiolar epithelium.

The protein resides in the membrane. Its subcellular location is the cell membrane. The catalysed reaction is hydrogencarbonate + H(+) = CO2 + H2O. With respect to regulation, inhibited by coumarins, saccharin, sulfonamide derivatives such as acetazolamide (AZA), benzenesulfonamide and derivatives (4-carboxyethylbenzene-sulfonamide, 4-carboxyethylbenzene-sulfonamide ethyl ester, 4-(acetyl-2-aminoethyl)benzene-sulfonamide, 4-aminoethylbenzene-sulfonamide) and Foscarnet (phosphonoformate trisodium salt). Reversible hydration of carbon dioxide. The chain is Carbonic anhydrase 12 from Homo sapiens (Human).